A 288-amino-acid polypeptide reads, in one-letter code: Phosphatidylserine decarboxylase proenzyme (288 aa).

Residues aspartate 91, histidine 148, and serine 254 each act as charge relay system; for autoendoproteolytic cleavage activity in the active site. Serine 254 functions as the Schiff-base intermediate with substrate; via pyruvic acid; for decarboxylase activity in the catalytic mechanism. A Pyruvic acid (Ser); by autocatalysis modification is found at serine 254.

The protein belongs to the phosphatidylserine decarboxylase family. PSD-B subfamily. Prokaryotic type I sub-subfamily. In terms of assembly, heterodimer of a large membrane-associated beta subunit and a small pyruvoyl-containing alpha subunit. Pyruvate serves as cofactor. Post-translationally, is synthesized initially as an inactive proenzyme. Formation of the active enzyme involves a self-maturation process in which the active site pyruvoyl group is generated from an internal serine residue via an autocatalytic post-translational modification. Two non-identical subunits are generated from the proenzyme in this reaction, and the pyruvate is formed at the N-terminus of the alpha chain, which is derived from the carboxyl end of the proenzyme. The autoendoproteolytic cleavage occurs by a canonical serine protease mechanism, in which the side chain hydroxyl group of the serine supplies its oxygen atom to form the C-terminus of the beta chain, while the remainder of the serine residue undergoes an oxidative deamination to produce ammonia and the pyruvoyl prosthetic group on the alpha chain. During this reaction, the Ser that is part of the protease active site of the proenzyme becomes the pyruvoyl prosthetic group, which constitutes an essential element of the active site of the mature decarboxylase.

The protein resides in the cell membrane. It carries out the reaction a 1,2-diacyl-sn-glycero-3-phospho-L-serine + H(+) = a 1,2-diacyl-sn-glycero-3-phosphoethanolamine + CO2. The protein operates within phospholipid metabolism; phosphatidylethanolamine biosynthesis; phosphatidylethanolamine from CDP-diacylglycerol: step 2/2. Catalyzes the formation of phosphatidylethanolamine (PtdEtn) from phosphatidylserine (PtdSer). This chain is Phosphatidylserine decarboxylase proenzyme, found in Pseudoalteromonas translucida (strain TAC 125).